Reading from the N-terminus, the 215-residue chain is N-(5'-phosphoribosyl)anthranilate isomerase (215 aa).

This sequence belongs to the TrpF family.

The enzyme catalyses N-(5-phospho-beta-D-ribosyl)anthranilate = 1-(2-carboxyphenylamino)-1-deoxy-D-ribulose 5-phosphate. It functions in the pathway amino-acid biosynthesis; L-tryptophan biosynthesis; L-tryptophan from chorismate: step 3/5. The polypeptide is N-(5'-phosphoribosyl)anthranilate isomerase (Cellvibrio japonicus (strain Ueda107) (Pseudomonas fluorescens subsp. cellulosa)).